The chain runs to 217 residues: Adenylate kinase (217 aa).

10–15 (GAGKGT) is a binding site for ATP. An NMP region spans residues 30–59 (STGDMLREAVAKGTELGKKAKEYMDKGELV). Residues threonine 31, arginine 36, 57–59 (ELV), 85–88 (GFPR), and glutamine 92 contribute to the AMP site. The tract at residues 126-163 (YRRTCRNCGAVYHLIYAPPKEDNKCDKCGGELYQRDDD) is LID. Position 127 (arginine 127) interacts with ATP. Cysteine 130 and cysteine 133 together coordinate Zn(2+). 136–137 (VY) provides a ligand contact to ATP. Zn(2+)-binding residues include cysteine 150 and cysteine 153. AMP is bound by residues arginine 160 and arginine 171. Lysine 199 is a binding site for ATP.

The protein belongs to the adenylate kinase family. As to quaternary structure, monomer.

Its subcellular location is the cytoplasm. The enzyme catalyses AMP + ATP = 2 ADP. Its pathway is purine metabolism; AMP biosynthesis via salvage pathway; AMP from ADP: step 1/1. In terms of biological role, catalyzes the reversible transfer of the terminal phosphate group between ATP and AMP. Plays an important role in cellular energy homeostasis and in adenine nucleotide metabolism. This Archaeoglobus fulgidus (strain ATCC 49558 / DSM 4304 / JCM 9628 / NBRC 100126 / VC-16) protein is Adenylate kinase.